Reading from the N-terminus, the 246-residue chain is Putative F-box/LRR-repeat protein 9 (246 aa).

The F-box domain maps to 18–65; sequence YRNWAELPPELTSSILLRLGAIEILQNAQRVCKSWRRVCQDPSMWRKI.

This is Putative F-box/LRR-repeat protein 9 (FBL9) from Arabidopsis thaliana (Mouse-ear cress).